A 663-amino-acid chain; its full sequence is Polyunsaturated fatty acid lipoxygenase ALOX12 (663 aa).

The 113-residue stretch at 2-114 (GRYRIRVATG…ILSLPEGTAR (113 aa)) folds into the PLAT domain. A Lipoxygenase domain is found at 115 to 663 (LPGDNALDMF…PSCIENSVTI (549 aa)). A Phosphoserine modification is found at serine 246. Residues histidine 360, histidine 365, histidine 540, asparagine 544, and isoleucine 663 each contribute to the Fe cation site.

This sequence belongs to the lipoxygenase family. The cofactor is Fe cation. In terms of tissue distribution, expressed in vascular smooth muscle cells.

It is found in the cytoplasm. The protein localises to the cytosol. It localises to the membrane. It catalyses the reaction (5Z,8Z,11Z,14Z)-eicosatetraenoate + O2 = (12S)-hydroperoxy-(5Z,8Z,10E,14Z)-eicosatetraenoate. The enzyme catalyses (5Z,8Z,11Z,14Z)-eicosatetraenoate + O2 = (15S)-hydroperoxy-(5Z,8Z,11Z,13E)-eicosatetraenoate. The catalysed reaction is 2 leukotriene A4 + O2 + 2 H2O = 2 lipoxin A4. It carries out the reaction 2 leukotriene A4 + O2 + 2 H2O = 2 lipoxin B4. It catalyses the reaction (14S)-hydroperoxy-(4Z,7Z,10Z,12E,16Z,19Z)-docosahexaenoate = (13S,14S)-epoxy-(4Z,7Z,9E,11E,16Z,19Z)-docosahexaenoate + H2O. The enzyme catalyses N-(5Z,8Z,11Z,14Z)-eicosatetraenoyl-L-alanine + O2 = N-(15S)-hydroperoxy-(5Z,8Z,11Z,13E)-eicosatetraenoyl-alanine. The catalysed reaction is N-(5Z,8Z,11Z,14Z)-eicosatetraenoyl-L-alanine + O2 = N-(12S)-hydroperoxy-(5Z,8Z,10E,14Z)-eicosatetraenoyl-alanine. It carries out the reaction N-(5Z,8Z,11Z,14Z)-eicosatetraenoyl-gamma-aminobutanoate + O2 = N-(15S)-hydroperoxy-(5Z,8Z,11Z,13E)-eicosatetraenoyl-gamma-aminobutanoate. It catalyses the reaction N-(5Z,8Z,11Z,14Z)-eicosatetraenoyl-gamma-aminobutanoate + O2 = N-(12S)-hydroperoxy-(5Z,8Z,10E,14Z)-eicosatetraenoyl-gamma-aminobutanoate. The enzyme catalyses N-(5Z,8Z,11Z,14Z)-eicosatetraenoyl-glycine + O2 = N-(15S)-hydroperoxy-(5Z,8Z,11Z,13E)-eicosatetraenoyl-glycine. The catalysed reaction is N-(5Z,8Z,11Z,14Z)-eicosatetraenoyl-glycine + O2 = N-(12S)-hydroperoxy-(5Z,8Z,10E,14Z)-eicosatetraenoyl-glycine. It carries out the reaction N-(5Z,8Z,11Z,14Z)-eicosatetraenoyl-taurine + O2 = N-(12S)-hydroperoxy-(5Z,8Z,10E,14Z)-eicosatetraenoyl-taurine. It catalyses the reaction N-(5Z,8Z,11Z,14Z)-eicosatetraenoyl-taurine + O2 = N-(15S)-hydroperoxy-(5Z,8Z,11Z,13E)-eicosatetraenoyl-taurine. The enzyme catalyses (4Z,7Z,10Z,13Z,16Z,19Z)-docosahexaenoate + O2 = (14S)-hydroperoxy-(4Z,7Z,10Z,12E,16Z,19Z)-docosahexaenoate. The catalysed reaction is (7S)-hydroperoxy-(4Z,8E,10Z,13Z,16Z,19Z)-docosahexaenoate + O2 = (7S,14S)-dihydroperoxy-(4Z,8E,10Z,12E,16Z,19Z)-docosahexaenoate. It carries out the reaction (7S)-hydroperoxy-(4Z,8E,10Z,13Z,16Z,19Z)-docosahexaenoate + O2 = (7S,17S)-dihydroperoxy-(4Z,8E,10Z,13Z,15E,19Z)-docosahexaenoate. It catalyses the reaction (5Z,8Z,11Z,14Z,17Z)-eicosapentaenoate + O2 = (12S)-hydroperoxy-(5Z,8Z,10E,14Z,17Z)-eicosapentaenoate. The enzyme catalyses (8Z,11Z,14Z)-eicosatrienoate + O2 = (12S)-hydroperoxy-(8Z,10E,14Z)-eicosatrienoate. The catalysed reaction is (9Z,12Z)-octadecadienoate + O2 = (13S)-hydroperoxy-(9Z,11E)-octadecadienoate. It carries out the reaction (5Z,8Z,11Z)-eicosatrienoate + O2 = (12S)-hydroperoxy-(5Z,8Z,10E)-eicosatrienoate. It catalyses the reaction (14R,15S)-epoxy-(5Z,8Z,11Z)-eicosatrienoate + O2 = (12S)-hydroperoxy-(14R,15S)-epoxy-(5Z,8Z,10E)-eicosatrienoate. The enzyme catalyses (14S,15R)-epoxy-(5Z,8Z,11Z)-eicosatrienoate + O2 = (12S)-hydroperoxy-(14S,15R)-epoxy-(5Z,8Z,10E)-eicosatrienoate. The protein operates within lipid metabolism; hydroperoxy eicosatetraenoic acid biosynthesis. With respect to regulation, activated by EGF. Arachidonic acid conversion is inhibited by (13S,14S)-epoxy-(4Z,7Z,9E,11E,16Z,19Z)-docosahexaenoate (13S,14S-epoxy-DHA). Arachidonate 12-lipoxygenase activity is decreased when PH decreases from 7.4 to 6. In terms of biological role, catalyzes the regio and stereo-specific incorporation of molecular oxygen into free and esterified polyunsaturated fatty acids generating lipid hydroperoxides that can be further reduced to the corresponding hydroxy species. Mainly converts arachidonate ((5Z,8Z,11Z,14Z)-eicosatetraenoate) to the specific bioactive lipid (12S)-hydroperoxyeicosatetraenoate/(12S)-HPETE. Through the production of bioactive lipids like (12S)-HPETE it regulates different biological processes including platelet activation. It can also catalyze the epoxidation of double bonds of polyunsaturated fatty acids such as (14S)-hydroperoxy-docosahexaenoate/(14S)-HPDHA resulting in the formation of (13S,14S)-epoxy-DHA. Furthermore, it may participate in the sequential oxidations of DHA ((4Z,7Z,10Z,13Z,16Z,19Z)-docosahexaenoate) to generate specialized pro-resolving mediators (SPMs) like resolvin D5 ((7S,17S)-diHPDHA) and (7S,14S)-diHPDHA, that actively down-regulate the immune response and have anti-aggregation properties with platelets. An additional function involves a multistep process by which it transforms leukotriene A4/LTA4 into the bioactive lipids lipoxin A4/LXA4 and lipoxin B4/LXB4, both are vasoactive and LXA4 may regulate neutrophil function via occupancy of specific recognition sites. Can also peroxidize linoleate ((9Z,12Z)-octadecadienoate) to (13S)-hydroperoxyoctadecadienoate/ (13S-HPODE). Due to its role in regulating both the expression of the vascular endothelial growth factor (VEGF, an angiogenic factor involved in the survival and metastasis of solid tumors) and the expression of integrin beta-1 (known to affect tumor cell migration and proliferation), it can be regarded as protumorigenic. Important for cell survival, as it may play a role not only in proliferation but also in the prevention of apoptosis in vascular smooth muscle cells. This chain is Polyunsaturated fatty acid lipoxygenase ALOX12, found in Homo sapiens (Human).